We begin with the raw amino-acid sequence, 162 residues long: Allophycocyanin alpha-B chain (162 aa).

Asparagine 71 bears the N4-methylasparagine mark. Residue cysteine 81 participates in (2R,3E)-phycocyanobilin binding.

This sequence belongs to the phycobiliprotein family. In terms of processing, contains one covalently linked phycocyanobilin chromophore.

Its subcellular location is the plastid. It is found in the cyanelle thylakoid membrane. Its function is as follows. Allophycocyanin is a photosynthetic bile pigment-protein complex with maximum absorption at approximately 650 nanometers. This is Allophycocyanin alpha-B chain (apcD) from Cyanophora paradoxa.